Consider the following 388-residue polypeptide: Oligogalacturonide lyase (388 aa).

The protein localises to the periplasm. The enzyme catalyses 4-(4-deoxy-alpha-D-galact-4-enuronosyl)-D-galacturonate = 2 5-dehydro-4-deoxy-D-glucuronate. It participates in glycan metabolism; pectin degradation; 2-dehydro-3-deoxy-D-gluconate from pectin: step 3/5. Involved in degradation of pectin, which causes soft-rod disease in plants. This Pectobacterium atrosepticum (strain SCRI 1043 / ATCC BAA-672) (Erwinia carotovora subsp. atroseptica) protein is Oligogalacturonide lyase (ogl).